The primary structure comprises 134 residues: Small ribosomal subunit protein uS8c (134 aa).

Belongs to the universal ribosomal protein uS8 family. In terms of assembly, part of the 30S ribosomal subunit.

The protein resides in the plastid. It localises to the chloroplast. Its function is as follows. One of the primary rRNA binding proteins, it binds directly to 16S rRNA central domain where it helps coordinate assembly of the platform of the 30S subunit. The protein is Small ribosomal subunit protein uS8c (rps8) of Phaseolus vulgaris (Kidney bean).